We begin with the raw amino-acid sequence, 156 residues long: Putative HTH-type transcriptional regulator BadM (156 aa).

In terms of domain architecture, HTH rrf2-type spans 4-130; the sequence is RLQKSTMCGL…RSVSITSLLK (127 aa). The disordered stretch occupies residues 136–156; the sequence is RRKTERGPNGASARHSSAGRA. The span at 145 to 156 shows a compositional bias: low complexity; it reads GASARHSSAGRA.

The chain is Putative HTH-type transcriptional regulator BadM (badM) from Rhodopseudomonas palustris (strain ATCC BAA-98 / CGA009).